Consider the following 264-residue polypeptide: Thiazole synthase (264 aa).

The active-site Schiff-base intermediate with DXP is lysine 106. 1-deoxy-D-xylulose 5-phosphate-binding positions include glycine 167, 193 to 194, and 215 to 216; these read AG and NS.

Belongs to the ThiG family. Homotetramer. Forms heterodimers with either ThiH or ThiS.

The protein resides in the cytoplasm. The catalysed reaction is [ThiS sulfur-carrier protein]-C-terminal-Gly-aminoethanethioate + 2-iminoacetate + 1-deoxy-D-xylulose 5-phosphate = [ThiS sulfur-carrier protein]-C-terminal Gly-Gly + 2-[(2R,5Z)-2-carboxy-4-methylthiazol-5(2H)-ylidene]ethyl phosphate + 2 H2O + H(+). The protein operates within cofactor biosynthesis; thiamine diphosphate biosynthesis. Functionally, catalyzes the rearrangement of 1-deoxy-D-xylulose 5-phosphate (DXP) to produce the thiazole phosphate moiety of thiamine. Sulfur is provided by the thiocarboxylate moiety of the carrier protein ThiS. In vitro, sulfur can be provided by H(2)S. The polypeptide is Thiazole synthase (Pseudomonas fluorescens (strain SBW25)).